The primary structure comprises 369 residues: MKFYLVGGAVRDMLLGITPKDKDWVVVGATEDEMLANGFIKIAANFPVFIHPQTKQEYALARSEKKTANGYHGFEVNFSKYITLEDDLKRRDLTINSIAIDQNNKVIDPFNGQADLQNRILRHTSIAFIEDPLRVVRLARFKAQLSNFNFSIAEETLTLIKELIKTGELNHLTRERLHIEFVKALNNPKIFFTTLEELEALKIIFPNISCILLLIPNKSFFENPIYKDSNINEKITLCLLKVPQQKLDDIRKELLLTNKHYKLLKASIAISKILEDRNITAEEIFQLIKNANIIRDKNLFAESLNLYKKYLKVCDTITPHRNYQLLQTTINTIKNASINSLTIETIPKDKLRNTLKQLYIDIIKKQLKL.

Glycine 8 and arginine 11 together coordinate ATP. CTP-binding residues include glycine 8 and arginine 11. The Mg(2+) site is built by aspartate 21 and aspartate 23. Positions 91, 137, and 140 each coordinate ATP. Positions 91, 137, and 140 each coordinate CTP.

This sequence belongs to the tRNA nucleotidyltransferase/poly(A) polymerase family. Bacterial CCA-adding enzyme type 2 subfamily. Mg(2+) is required as a cofactor.

The catalysed reaction is a tRNA precursor + 2 CTP + ATP = a tRNA with a 3' CCA end + 3 diphosphate. It carries out the reaction a tRNA with a 3' CCA end + 2 CTP + ATP = a tRNA with a 3' CCACCA end + 3 diphosphate. Catalyzes the addition and repair of the essential 3'-terminal CCA sequence in tRNAs without using a nucleic acid template. Adds these three nucleotides in the order of C, C, and A to the tRNA nucleotide-73, using CTP and ATP as substrates and producing inorganic pyrophosphate. tRNA 3'-terminal CCA addition is required both for tRNA processing and repair. Also involved in tRNA surveillance by mediating tandem CCA addition to generate a CCACCA at the 3' terminus of unstable tRNAs. While stable tRNAs receive only 3'-terminal CCA, unstable tRNAs are marked with CCACCA and rapidly degraded. The sequence is that of CCA-adding enzyme from Francisella tularensis subsp. novicida (strain U112).